A 161-amino-acid polypeptide reads, in one-letter code: Nucleotide-binding protein Bmul_0741/BMULJ_02519 (161 aa).

It belongs to the YajQ family.

Functionally, nucleotide-binding protein. The chain is Nucleotide-binding protein Bmul_0741/BMULJ_02519 from Burkholderia multivorans (strain ATCC 17616 / 249).